We begin with the raw amino-acid sequence, 740 residues long: DNA-directed RNA polymerase subunit beta' (740 aa).

Cys65, Cys67, Cys103, and Cys106 together coordinate Zn(2+). Asp539, Asp541, and Asp543 together coordinate Mg(2+).

This sequence belongs to the RNA polymerase beta' chain family. RpoC1 subfamily. As to quaternary structure, in plastids the minimal PEP RNA polymerase catalytic core is composed of four subunits: alpha, beta, beta', and beta''. When a (nuclear-encoded) sigma factor is associated with the core the holoenzyme is formed, which can initiate transcription. Requires Mg(2+) as cofactor. The cofactor is Zn(2+).

Its subcellular location is the plastid. It is found in the chloroplast. The enzyme catalyses RNA(n) + a ribonucleoside 5'-triphosphate = RNA(n+1) + diphosphate. Functionally, DNA-dependent RNA polymerase catalyzes the transcription of DNA into RNA using the four ribonucleoside triphosphates as substrates. In Ostreococcus tauri, this protein is DNA-directed RNA polymerase subunit beta'.